The following is an 84-amino-acid chain: uncharacterized protein (84 aa).

An HTH cro/C1-type domain is found at 7–62 (IDVMLAKRKMSVTELSERVGITMANLSILKNGKAKAIRLSTLEAICKALECQPGDI). Positions 18 to 37 (VTELSERVGITMANLSILKN) form a DNA-binding region, H-T-H motif.

This is an uncharacterized protein from Bacillus subtilis (strain 168).